We begin with the raw amino-acid sequence, 172 residues long: MIITVGGLAGTGTTTTAELLSEKLGIPFVSSGSIFRAMAEEKGMSVLEFSEFAESNDNIDKEIDKRQAELAKSSENLILEGRLSAYFVEADLKLWLMAPLDVRAQRISQRESKSVDVAKEEIKIREESEALRYLDIHNIDISNLDIYDLMINTDSFDPESITKIILTTLKVI.

7-15 serves as a coordination point for ATP; sequence GLAGTGTTT.

It belongs to the cytidylate kinase family. Type 2 subfamily.

It is found in the cytoplasm. It carries out the reaction CMP + ATP = CDP + ADP. The enzyme catalyses dCMP + ATP = dCDP + ADP. The polypeptide is Cytidylate kinase (Methanobrevibacter smithii (strain ATCC 35061 / DSM 861 / OCM 144 / PS)).